Here is a 219-residue protein sequence, read N- to C-terminus: Imidazole glycerol phosphate synthase subunit HisH (219 aa).

The 217-residue stretch at 2-218 folds into the Glutamine amidotransferase type-1 domain; sequence KVVVIDSGTG…MVWTPEGTSG (217 aa). Residue Cys87 is the Nucleophile of the active site. Active-site residues include His193 and Glu195.

In terms of assembly, heterodimer of HisH and HisF.

Its subcellular location is the cytoplasm. The catalysed reaction is 5-[(5-phospho-1-deoxy-D-ribulos-1-ylimino)methylamino]-1-(5-phospho-beta-D-ribosyl)imidazole-4-carboxamide + L-glutamine = D-erythro-1-(imidazol-4-yl)glycerol 3-phosphate + 5-amino-1-(5-phospho-beta-D-ribosyl)imidazole-4-carboxamide + L-glutamate + H(+). It catalyses the reaction L-glutamine + H2O = L-glutamate + NH4(+). Its pathway is amino-acid biosynthesis; L-histidine biosynthesis; L-histidine from 5-phospho-alpha-D-ribose 1-diphosphate: step 5/9. Its function is as follows. IGPS catalyzes the conversion of PRFAR and glutamine to IGP, AICAR and glutamate. The HisH subunit catalyzes the hydrolysis of glutamine to glutamate and ammonia as part of the synthesis of IGP and AICAR. The resulting ammonia molecule is channeled to the active site of HisF. This Granulibacter bethesdensis (strain ATCC BAA-1260 / CGDNIH1) protein is Imidazole glycerol phosphate synthase subunit HisH.